A 295-amino-acid chain; its full sequence is uncharacterized protein (295 aa).

Positions 1–26 are cleaved as a signal peptide; it reads MKKYLALAAIVAICALWLTQNSNFEA.

This is an uncharacterized protein from Archaeoglobus fulgidus (strain ATCC 49558 / DSM 4304 / JCM 9628 / NBRC 100126 / VC-16).